A 597-amino-acid chain; its full sequence is Intrastrand cross-link recognition protein (597 aa).

Over residues 1-28 (MNTGISPKQDDASNSNLLNIGQDHSLQY) the composition is skewed to polar residues. Disordered stretches follow at residues 1-134 (MNTG…NVNA), 174-212 (QTNP…LAAS), 259-291 (SAGN…QQQM), and 327-364 (HLQQ…PKRP). Basic and acidic residues predominate over residues 32–42 (EHNDSQYRDAS). Low complexity-rich tracts occupy residues 52–134 (QFQA…NVNA), 178–212 (SVTG…LAAS), 260–271 (AGNAAGNANTAT), 281–291 (QPQLTHHQQQM), and 327–337 (HLQQQQQQQQH). Residues 351–361 (ERRKQLKKQGP) show a composition bias toward basic residues. DNA-binding regions (HMG box) lie at residues 361 to 429 (PKRP…DAYE) and 434 to 502 (PKRP…PDEN). Ser-532 carries the post-translational modification Phosphoserine. 2 stretches are compositionally biased toward low complexity: residues 543–556 (SVTG…NPNT) and 564–580 (LQQQ…QQQQ). Residues 543–597 (SVTGSNSNSTNPNTPVSPPISLQQQPLQQQQQQQQQQQHMLLADPTTNGSIIKNE) are disordered. The segment covering 587–597 (PTTNGSIIKNE) has biased composition (polar residues).

The protein localises to the nucleus. Functionally, binds to platinated DNA and confers sensitivity to the anticancer drug cisplatin. Activate the expression of the COX5B gene. The protein is Intrastrand cross-link recognition protein (IXR1) of Saccharomyces cerevisiae (strain ATCC 204508 / S288c) (Baker's yeast).